Reading from the N-terminus, the 95-residue chain is Large ribosomal subunit protein bL25 (95 aa).

This sequence belongs to the bacterial ribosomal protein bL25 family. Part of the 50S ribosomal subunit; part of the 5S rRNA/L5/L18/L25 subcomplex. Contacts the 5S rRNA. Binds to the 5S rRNA independently of L5 and L18.

In terms of biological role, this is one of the proteins that binds to the 5S RNA in the ribosome where it forms part of the central protuberance. The polypeptide is Large ribosomal subunit protein bL25 (Haemophilus ducreyi (strain 35000HP / ATCC 700724)).